A 426-amino-acid chain; its full sequence is 3-phosphoshikimate 1-carboxyvinyltransferase (426 aa).

Lys20, Ser21, and Arg25 together coordinate 3-phosphoshikimate. A phosphoenolpyruvate-binding site is contributed by Lys20. 2 residues coordinate phosphoenolpyruvate: Gly92 and Arg120. Ser166, Gln168, Asp312, and Lys339 together coordinate 3-phosphoshikimate. Residue Gln168 coordinates phosphoenolpyruvate. Asp312 serves as the catalytic Proton acceptor. Phosphoenolpyruvate contacts are provided by Arg343 and Arg385.

This sequence belongs to the EPSP synthase family. In terms of assembly, monomer.

It is found in the cytoplasm. The enzyme catalyses 3-phosphoshikimate + phosphoenolpyruvate = 5-O-(1-carboxyvinyl)-3-phosphoshikimate + phosphate. It participates in metabolic intermediate biosynthesis; chorismate biosynthesis; chorismate from D-erythrose 4-phosphate and phosphoenolpyruvate: step 6/7. Its function is as follows. Catalyzes the transfer of the enolpyruvyl moiety of phosphoenolpyruvate (PEP) to the 5-hydroxyl of shikimate-3-phosphate (S3P) to produce enolpyruvyl shikimate-3-phosphate and inorganic phosphate. This Enterococcus faecalis (strain ATCC 700802 / V583) protein is 3-phosphoshikimate 1-carboxyvinyltransferase.